The chain runs to 378 residues: Probable endopolygalacturonase AFUB_016610 (378 aa).

A signal peptide spans 1–19 (MLKLMGSLVLLASAAEVIA). Positions 20–35 (SPAAEPVAPSTTLEKR) are excised as a propeptide. Cys-38 and Cys-56 are oxidised to a cystine. PbH1 repeat units lie at residues 147–169 (TSSS…SING), 170–200 (CDGL…DIGS), and 201–222 (SSNI…AVNS). Catalysis depends on Asp-215, which acts as the Proton donor. Residues Cys-217 and Cys-233 are joined by a disulfide bond. Residue His-237 is part of the active site. PbH1 repeat units follow at residues 252 to 273 (VENV…RIKA) and 281 to 303 (IKGV…LIEQ). An N-linked (GlcNAc...) asparagine glycan is attached at Asn-254. Asn-327 carries an N-linked (GlcNAc...) asparagine glycan. Cys-345 and Cys-350 are joined by a disulfide. N-linked (GlcNAc...) asparagine glycosylation occurs at Asn-352. Cys-369 and Cys-378 are joined by a disulfide.

This sequence belongs to the glycosyl hydrolase 28 family.

It is found in the secreted. It catalyses the reaction (1,4-alpha-D-galacturonosyl)n+m + H2O = (1,4-alpha-D-galacturonosyl)n + (1,4-alpha-D-galacturonosyl)m.. Involved in maceration and soft-rotting of plant tissue. Hydrolyzes the 1,4-alpha glycosidic bonds of de-esterified pectate in the smooth region of the plant cell wall. This Aspergillus fumigatus (strain CBS 144.89 / FGSC A1163 / CEA10) (Neosartorya fumigata) protein is Probable endopolygalacturonase AFUB_016610.